We begin with the raw amino-acid sequence, 321 residues long: Phosphate metabolism protein 8 (321 aa).

This sequence belongs to the SSM1 family.

Functionally, may be involved in phosphate metabolism. In Saccharomyces cerevisiae (strain ATCC 204508 / S288c) (Baker's yeast), this protein is Phosphate metabolism protein 8 (PHM8).